An 899-amino-acid polypeptide reads, in one-letter code: Gamma-aminobutyric acid type B receptor subunit 1 (899 aa).

The first 19 residues, 1 to 19 (MFVRSSWLLLWGTIVWASA), serve as a signal peptide directing secretion. At 20–447 (EPVTLHIGGT…KKHAMTVSNE (428 aa)) the chain is on the extracellular side. Residues Asn-69, Asn-266, Asn-339, Asn-353, and Asn-371 are each glycosylated (N-linked (GlcNAc...) asparagine). A helical transmembrane segment spans residues 448-468 (FYYPTILFAVLGIAACVFIYL). The Cytoplasmic portion of the chain corresponds to 469-487 (FTQKHHERLIIFQSQPECN). Residues 488 to 508 (NILLIGCSLCLFSLFLIGLPS) traverse the membrane as a helical segment. Residues 509–525 (DDISISESLFPLLCHAR) are Extracellular-facing. The helical transmembrane segment at 526 to 546 (VTILLFGFTFAYGSMFAKVWI) threads the bilayer. Residues 547-616 (VHRMGATENQ…LNQPISSSKF (70 aa)) lie on the Cytoplasmic side of the membrane. The helical transmembrane segment at 617-637 (YVIVAALTAVDVFVCFVWVLI) threads the bilayer. At 638–674 (DPLHLTEQKFPLFTPADSEEDEMIMPVLQQCQSNQQE) the chain is on the extracellular side. The chain crosses the membrane as a helical span at residues 675-695 (VWIGIIMGFKCLLLVFGTFLS). The Cytoplasmic portion of the chain corresponds to 696–713 (YETRNLKLRFINDSRFVG). Residues 714 to 734 (LAIYNVAVMTLVTAPVVTLLI) traverse the membrane as a helical segment. Over 735-741 (HGKVDAN) the chain is Extracellular. A helical membrane pass occupies residues 742–762 (FAFISLTVLICTYISVGLIYG). At 763-899 (PKIRHIIKVP…SSTSSDEILL (137 aa)) the chain is on the cytoplasmic side. A coiled-coil region spans residues 791 to 842 (KVDQKRYDMLKKENETLQIQIEEKERKIHECKERLEELTKNSETEDMNAQLL). The segment at 870 to 899 (DLQNGNHPGQIYENDNDDDGSSTSSDEILL) is disordered. The segment covering 890–899 (SSTSSDEILL) has biased composition (low complexity).

Belongs to the G-protein coupled receptor 3 family. May form a heterodimer with gbb-2. In terms of tissue distribution, expressed in the nervous system, including cholinergic motor neurons, but not in GABAergic motor neurons or muscle.

The protein resides in the cell membrane. In terms of biological role, component of a heterodimeric G-protein coupled receptor for GABA, formed by gbb-1 and gbb-2. Within the heterodimeric GABA receptor, only gbb-1 seems to bind agonists, while gbb-2 mediates coupling to G proteins. Ligand binding causes a conformation change that triggers signaling via guanine nucleotide-binding proteins (G proteins) and modulates the activity of down-stream effectors, such as adenylate cyclase. Signaling inhibits adenylate cyclase, stimulates phospholipase A2, activates potassium channels, inactivates voltage-dependent calcium-channels and modulates inositol phospholipid hydrolysis. Calcium is required for high affinity binding to GABA. Plays a critical role in the fine-tuning of inhibitory synaptic transmission. Pre-synaptic GABA receptor inhibits neurotransmitter release by down-regulating high-voltage activated calcium channels, whereas postsynaptic GABA receptor decreases neuronal excitability by activating a prominent inwardly rectifying potassium (Kir) conductance that underlies the late inhibitory postsynaptic potentials. Along with gbb-2, may couple to the G(o)-alpha G-protein goa-1 to negatively regulate cholinergic receptor activity in the presence of high levels of acetylcholine in ventral cord motor neurons. As acetylcholine depolarizes body wall muscles, modulation of acetylcholine levels most likely results in the control of locomotory behavior. Acts in neurons to regulate lifespan, and this may be through G-protein-egl-8/PLC-beta signaling to the transcription factor daf-16/FOXO. The polypeptide is Gamma-aminobutyric acid type B receptor subunit 1 (Caenorhabditis elegans).